The following is a 487-amino-acid chain: Argininosuccinate lyase (487 aa).

This sequence belongs to the lyase 1 family. Argininosuccinate lyase subfamily.

It is found in the cytoplasm. The catalysed reaction is 2-(N(omega)-L-arginino)succinate = fumarate + L-arginine. It functions in the pathway amino-acid biosynthesis; L-arginine biosynthesis; L-arginine from L-ornithine and carbamoyl phosphate: step 3/3. The sequence is that of Argininosuccinate lyase from Methanothrix thermoacetophila (strain DSM 6194 / JCM 14653 / NBRC 101360 / PT) (Methanosaeta thermophila).